Reading from the N-terminus, the 468-residue chain is Immunoglobulin superfamily member 21 (468 aa).

The N-terminal stretch at 1 to 24 (MRAAPSLRRASCLLLAAILDLARG) is a signal peptide. 2 consecutive Ig-like domains span residues 25 to 132 (YLTV…VVLA) and 344 to 429 (PKIM…TRLI). The cysteines at positions 46 and 116 are disulfide-linked.

Interacts (Ig-like 1 domain) with NRXN2 (via Laminin G-like 1 domain) in a trans-interaction manner. Expressed in brain.

The protein resides in the postsynaptic cell membrane. Its function is as follows. Involved in synaptic inhibition in the brain. Selectively regulates inhibitory presynaptic differentiation through interacting with presynaptic NRXN2. This is Immunoglobulin superfamily member 21 from Rattus norvegicus (Rat).